Consider the following 209-residue polypeptide: Ribosomal RNA large subunit methyltransferase E (209 aa).

S-adenosyl-L-methionine is bound by residues glycine 63, tryptophan 65, aspartate 83, aspartate 99, and aspartate 124. Lysine 164 functions as the Proton acceptor in the catalytic mechanism.

This sequence belongs to the class I-like SAM-binding methyltransferase superfamily. RNA methyltransferase RlmE family.

The protein resides in the cytoplasm. The catalysed reaction is uridine(2552) in 23S rRNA + S-adenosyl-L-methionine = 2'-O-methyluridine(2552) in 23S rRNA + S-adenosyl-L-homocysteine + H(+). Specifically methylates the uridine in position 2552 of 23S rRNA at the 2'-O position of the ribose in the fully assembled 50S ribosomal subunit. The polypeptide is Ribosomal RNA large subunit methyltransferase E (Shewanella denitrificans (strain OS217 / ATCC BAA-1090 / DSM 15013)).